Consider the following 101-residue polypeptide: Small ribosomal subunit protein uS14 (101 aa).

The interval 1–23 is disordered; that stretch reads MAKKSSVEKNKRRRKMVAQQAPK.

Belongs to the universal ribosomal protein uS14 family. Part of the 30S ribosomal subunit. Contacts proteins S3 and S10.

Its function is as follows. Binds 16S rRNA, required for the assembly of 30S particles and may also be responsible for determining the conformation of the 16S rRNA at the A site. This is Small ribosomal subunit protein uS14 from Rhodospirillum centenum (strain ATCC 51521 / SW).